The sequence spans 240 residues: MNERIALYEGKAKIVYASESPDELVLHFKDDTSAFDGEKVEQLAHKGEINNAFNAFIMEYLQGEGVPTHFIRRLNARESLVRRLEMIPVECVVRNRAAGSLSKRLGIEEGRVLEPPTLEFFLKNDALHDPMINTSHIRTFGWATAEEVEAMRRWTMRVNMLLSALFAKANLILVDFKLEFGRFDGELYLGDEFSPDGCRLWDALSLEKMDKDRFRRGLGGVVEAYAEVARRLGVPLPAAS.

It belongs to the SAICAR synthetase family.

It catalyses the reaction 5-amino-1-(5-phospho-D-ribosyl)imidazole-4-carboxylate + L-aspartate + ATP = (2S)-2-[5-amino-1-(5-phospho-beta-D-ribosyl)imidazole-4-carboxamido]succinate + ADP + phosphate + 2 H(+). The protein operates within purine metabolism; IMP biosynthesis via de novo pathway; 5-amino-1-(5-phospho-D-ribosyl)imidazole-4-carboxamide from 5-amino-1-(5-phospho-D-ribosyl)imidazole-4-carboxylate: step 1/2. The sequence is that of Phosphoribosylaminoimidazole-succinocarboxamide synthase from Acidithiobacillus ferrooxidans (strain ATCC 23270 / DSM 14882 / CIP 104768 / NCIMB 8455) (Ferrobacillus ferrooxidans (strain ATCC 23270)).